The sequence spans 40 residues: Cytolysin EnT (40 aa).

A plays an important role in the hemolytic activity region spans residues 3-12; that stretch reads ALAGTIIEGA. Positions 11-30 are N-terminal region; sequence GASLTFSVLTTILDALGSVS.

The protein belongs to the actinoporin family. Sea anemone subfamily. Octamer or nonamer in membranes. Monomer in the soluble state.

Its subcellular location is the secreted. It localises to the nematocyst. The protein resides in the target cell membrane. Its function is as follows. Pore-forming protein that forms cations-selective hydrophilic pores of around 1 nm and causes cytolysis. Pore formation is a multi-step process that involves specific recognition of membrane sphingomyelin (but neither cholesterol nor phosphatidylcholine) using aromatic rich region and adjacent phosphocholine (POC) binding site, firm binding to the membrane (mainly driven by hydrophobic interactions) accompanied by the transfer of the N-terminal region to the lipid-water interface and finally pore formation after oligomerization of monomers. This toxin shows hemolytic activities. The polypeptide is Cytolysin EnT (Entacmaea quadricolor (Bubble-tip anemone)).